Consider the following 159-residue polypeptide: 6,7-dimethyl-8-ribityllumazine synthase (159 aa).

Residues Trp26, 58-60, and 80-82 each bind 5-amino-6-(D-ribitylamino)uracil; these read AIE and VVI. Residue 85 to 86 participates in (2S)-2-hydroxy-3-oxobutyl phosphate binding; the sequence is ET. His88 (proton donor) is an active-site residue. Asn113 lines the 5-amino-6-(D-ribitylamino)uracil pocket. Position 127 (Arg127) interacts with (2S)-2-hydroxy-3-oxobutyl phosphate.

It belongs to the DMRL synthase family. As to quaternary structure, homopentamer.

It catalyses the reaction (2S)-2-hydroxy-3-oxobutyl phosphate + 5-amino-6-(D-ribitylamino)uracil = 6,7-dimethyl-8-(1-D-ribityl)lumazine + phosphate + 2 H2O + H(+). The protein operates within cofactor biosynthesis; riboflavin biosynthesis; riboflavin from 2-hydroxy-3-oxobutyl phosphate and 5-amino-6-(D-ribitylamino)uracil: step 1/2. Catalyzes the formation of 6,7-dimethyl-8-ribityllumazine by condensation of 5-amino-6-(D-ribitylamino)uracil with 3,4-dihydroxy-2-butanone 4-phosphate. This is the penultimate step in the biosynthesis of riboflavin. The polypeptide is 6,7-dimethyl-8-ribityllumazine synthase (Mycolicibacterium gilvum (strain PYR-GCK) (Mycobacterium gilvum (strain PYR-GCK))).